We begin with the raw amino-acid sequence, 950 residues long: Protocadherin alpha-6 (950 aa).

Positions 1-29 (MVFTPEDRLGKQCLLLPLLLLAAWKVGSG) are cleaved as a signal peptide. The Extracellular portion of the chain corresponds to 30–697 (QLHYSVPEEA…GPEAALVDVN (668 aa)). 6 Cadherin domains span residues 34 to 133 (SVPE…PPLF), 157 to 242 (ASDA…APNF), 243 to 350 (EQSE…VPEI), 351 to 455 (ALTS…APAF), 456 to 565 (AQPE…APAL), and 581 to 678 (VPRS…APKA). Residues asparagine 257, asparagine 265, asparagine 386, and asparagine 548 are each glycosylated (N-linked (GlcNAc...) asparagine). A helical transmembrane segment spans residues 698–718 (VYLIIAICAVSSLLVLTLLLY). Residues 719-950 (TALRCSAPST…GNSTTDNSDQ (232 aa)) are Cytoplasmic-facing. PXXP repeat units lie at residues 799-802 (PRQP), 832-835 (PGGP), 873-876 (PGNP), and 891-894 (PGSP). The interval 799-894 (PRQPNPDWRY…PDKFIIPGSP (96 aa)) is 4 X 4 AA repeats of P-X-X-P. The tract at residues 830 to 889 (AGPGGPDQQWPTVSSATPEPEAGEVSPPVGAGVNSNSWTFKYGPGNPKQSGPGELPDKFI) is disordered. Positions 901–950 (QEPANSQIDKSDFITFGKKEETKKKKKKKKGNKTQEKKEKGNSTTDNSDQ) are disordered. A compositionally biased stretch (basic and acidic residues) spans 909–923 (DKSDFITFGKKEETK).

The protein resides in the cell membrane. Potential calcium-dependent cell-adhesion protein. May be involved in the establishment and maintenance of specific neuronal connections in the brain. In Pan troglodytes (Chimpanzee), this protein is Protocadherin alpha-6 (PCDHA6).